We begin with the raw amino-acid sequence, 246 residues long: Bis(5'-nucleosyl)-tetraphosphatase PrpE [asymmetrical] (246 aa).

The protein belongs to the PrpE family. Ni(2+) serves as cofactor.

The enzyme catalyses P(1),P(4)-bis(5'-guanosyl) tetraphosphate + H2O = GMP + GTP + 2 H(+). Functionally, asymmetrically hydrolyzes Ap4p to yield AMP and ATP. The chain is Bis(5'-nucleosyl)-tetraphosphatase PrpE [asymmetrical] from Bacillus cereus (strain AH187).